A 250-amino-acid chain; its full sequence is UDP-2,3-diacylglucosamine hydrolase (250 aa).

Positions 8, 10, 41, 79, and 114 each coordinate Mn(2+). 79 to 80 contacts substrate; sequence NR. D122, S160, Q167, and H195 together coordinate substrate. Positions 195 and 197 each coordinate Mn(2+).

This sequence belongs to the LpxH family. It depends on Mn(2+) as a cofactor.

Its subcellular location is the cell inner membrane. The catalysed reaction is UDP-2-N,3-O-bis[(3R)-3-hydroxytetradecanoyl]-alpha-D-glucosamine + H2O = 2-N,3-O-bis[(3R)-3-hydroxytetradecanoyl]-alpha-D-glucosaminyl 1-phosphate + UMP + 2 H(+). The protein operates within glycolipid biosynthesis; lipid IV(A) biosynthesis; lipid IV(A) from (3R)-3-hydroxytetradecanoyl-[acyl-carrier-protein] and UDP-N-acetyl-alpha-D-glucosamine: step 4/6. Its function is as follows. Hydrolyzes the pyrophosphate bond of UDP-2,3-diacylglucosamine to yield 2,3-diacylglucosamine 1-phosphate (lipid X) and UMP by catalyzing the attack of water at the alpha-P atom. Involved in the biosynthesis of lipid A, a phosphorylated glycolipid that anchors the lipopolysaccharide to the outer membrane of the cell. In Nitrosococcus oceani (strain ATCC 19707 / BCRC 17464 / JCM 30415 / NCIMB 11848 / C-107), this protein is UDP-2,3-diacylglucosamine hydrolase.